The primary structure comprises 362 residues: MATLSFRNVKKTYAGNVPVIHGSDMDVADGEFIVIVGPSGCGKSTLMRMVAGLETVTEGEILIDDKVVNTLEPAERDIAMVFQNYALYPHMSVFDNMAYGLKIRRLPKDEIRKRVEAAAQILELGKLLDRRPRALSGGQRQRVAMGRAIVREPKVFLFDEPLSNLDAKLRVAMRLEILKLHRRLNTTSLYVTHDQVEAMTLAHRMVVMYQGVPEQIGTPMEVFEKPASTFVAGFIGSPPMNLLEVAVGGDGIVHTSDGIALDISPLAVPQQVRGRKVVMGLRPEHMLLNAQGLAAEIEMIETLGSEQLVHGRCGKHMVVVRCSTRQFSETPARVGDTLTIGPDGRHPLHWFEADTGRRVEGL.

The ABC transporter domain occupies 4–235; that stretch reads LSFRNVKKTY…PASTFVAGFI (232 aa). ATP is bound at residue 37-44; the sequence is GPSGCGKS.

Belongs to the ABC transporter superfamily. sn-glycerol-3-phosphate importer (TC 3.A.1.1.3) family. In terms of assembly, the complex is composed of two ATP-binding proteins (UgpC), two transmembrane proteins (UgpA and UgpE) and a solute-binding protein (UgpB).

Its subcellular location is the cell inner membrane. The enzyme catalyses sn-glycerol 3-phosphate(out) + ATP + H2O = sn-glycerol 3-phosphate(in) + ADP + phosphate + H(+). In terms of biological role, part of the ABC transporter complex UgpBAEC involved in sn-glycerol-3-phosphate (G3P) import. Responsible for energy coupling to the transport system. This is sn-glycerol-3-phosphate import ATP-binding protein UgpC from Bordetella parapertussis (strain 12822 / ATCC BAA-587 / NCTC 13253).